Here is a 43-residue protein sequence, read N- to C-terminus: Protein PsbN (43 aa).

The chain crosses the membrane as a helical span at residues 7-27; sequence LIVAIAAVTICITAFAIYTAF.

This sequence belongs to the PsbN family.

It is found in the cellular thylakoid membrane. In terms of biological role, may play a role in photosystem I and II biogenesis. This chain is Protein PsbN, found in Synechococcus sp. (strain JA-2-3B'a(2-13)) (Cyanobacteria bacterium Yellowstone B-Prime).